The sequence spans 62 residues: Small ribosomal subunit protein bS21 (62 aa).

Basic and acidic residues predominate over residues 40–52; sequence KPSVKRKLKSEAA. A disordered region spans residues 40–62; sequence KPSVKRKLKSEAARKRKNKRRRY. The segment covering 53-62 has biased composition (basic residues); it reads RKRKNKRRRY.

It belongs to the bacterial ribosomal protein bS21 family.

The sequence is that of Small ribosomal subunit protein bS21 from Limosilactobacillus fermentum (strain NBRC 3956 / LMG 18251) (Lactobacillus fermentum).